The sequence spans 206 residues: Dehydration-responsive element-binding protein 2D (206 aa).

The tract at residues 13–40 is disordered; that stretch reads ANKKQRTVQASSRKGCMRGKGGPDNASC. Positions 41–98 form a DNA-binding region, AP2/ERF; sequence TYKGVRQRTWGKWVAEIREPNRGARLWLGTFDTSREAALAYDSAARKLYGPEAHLNLP. Positions 102–139 are disordered; that stretch reads RSYPKTASSPASQTTPSSNTGGKSSSDSESPCSSNEMS. The segment covering 107–139 has biased composition (low complexity); the sequence is TASSPASQTTPSSNTGGKSSSDSESPCSSNEMS.

Belongs to the AP2/ERF transcription factor family. ERF subfamily.

It is found in the nucleus. Putative transcriptional activator that binds specifically to the DNA sequence 5'-[AG]CCGAC-3'. Binding to the C-repeat/DRE element mediates high salinity-inducible transcription. The protein is Dehydration-responsive element-binding protein 2D (DREB2D) of Arabidopsis thaliana (Mouse-ear cress).